We begin with the raw amino-acid sequence, 328 residues long: CCAAT/enhancer-binding protein beta (328 aa).

R3 carries the post-translational modification Asymmetric dimethylarginine; by CARM1. At K39 the chain carries N6-methylated lysine. A disordered region spans residues 165–274 (DSCKGPRKEE…NIAVRKSRDK (110 aa)). Low complexity predominate over residues 200–231 (SVPSGSSGNLSTSSSSSPPGTPNPSESSKSAA). T220 is modified (phosphothreonine; by RPS6KA1, CDK2 and MAPK). Residues 248 to 264 (KCVDKHSDEYKLRRERN) show a composition bias toward basic and acidic residues. Positions 254-317 (SDEYKLRRER…STLRNLFKQL (64 aa)) constitute a bZIP domain. The interval 258-278 (KLRRERNNIAVRKSRDKAKMR) is basic motif. Residues 280–287 (LETQHKVL) are leucine-zipper.

It belongs to the bZIP family. C/EBP subfamily. As to quaternary structure, binds DNA as a dimer. Interacts (not methylated) with MED23, MED26, SMARCA2, SMARCB1 and SMARCC1. In terms of processing, methylated. Methylation at Arg-3 by CARM1 and at Lys-39 by EHMT2, inhibit transactivation activity. Methylation is probably inhibited by phosphorylation at Thr-220. Specifically expressed in myelomoncytic cells.

Its subcellular location is the nucleus. Functionally, important transcriptional activator regulating the expression of genes involved in immune and inflammatory responses. Binds to regulatory regions of several acute-phase and cytokines genes and probably plays a role in the regulation of acute-phase reaction, inflammation and hemopoiesis. The consensus recognition site is 5'-T[TG]NNGNAA[TG]-3'. Functions in brown adipose tissue (BAT) differentiation. Regulates the transcriptional induction of peroxisome proliferator-activated receptor gamma (PPARG). Binds to the MGF and MIM-1 promoters and activates the transcription of these genes. In terms of biological role, important transcription factor regulating the expression of genes involved in immune and inflammatory responses. Also plays a significant role in adipogenesis, as well as in the gluconeogenic pathway, liver regeneration, and hematopoiesis. The consensus recognition site is 5'-T[TG]NNGNAA[TG]-3'. Its functional capacity is governed by protein interactions and post-translational protein modifications. The chain is CCAAT/enhancer-binding protein beta (CEBPB) from Gallus gallus (Chicken).